Reading from the N-terminus, the 157-residue chain is 2-C-methyl-D-erythritol 2,4-cyclodiphosphate synthase (157 aa).

Residues Asp-8 and His-10 each coordinate a divalent metal cation. 4-CDP-2-C-methyl-D-erythritol 2-phosphate is bound by residues 8 to 10 (DVH) and 34 to 35 (HS). An a divalent metal cation-binding site is contributed by His-42. Residues 56-58 (DIG), 61-65 (FPDTD), 100-106 (AQAPKMA), 132-135 (TTTE), Phe-139, and Arg-142 each bind 4-CDP-2-C-methyl-D-erythritol 2-phosphate.

Belongs to the IspF family. Homotrimer. A divalent metal cation is required as a cofactor.

The enzyme catalyses 4-CDP-2-C-methyl-D-erythritol 2-phosphate = 2-C-methyl-D-erythritol 2,4-cyclic diphosphate + CMP. Its pathway is isoprenoid biosynthesis; isopentenyl diphosphate biosynthesis via DXP pathway; isopentenyl diphosphate from 1-deoxy-D-xylulose 5-phosphate: step 4/6. In terms of biological role, involved in the biosynthesis of isopentenyl diphosphate (IPP) and dimethylallyl diphosphate (DMAPP), two major building blocks of isoprenoid compounds. Catalyzes the conversion of 4-diphosphocytidyl-2-C-methyl-D-erythritol 2-phosphate (CDP-ME2P) to 2-C-methyl-D-erythritol 2,4-cyclodiphosphate (ME-CPP) with a corresponding release of cytidine 5-monophosphate (CMP). The protein is 2-C-methyl-D-erythritol 2,4-cyclodiphosphate synthase of Pseudomonas syringae pv. syringae (strain B728a).